The primary structure comprises 191 residues: Ribonuclease MC (191 aa).

Q9 contributes to the RNA binding site. C15 and C23 form a disulfide bridge. Residues H34, N72 to V73, R75, F81, H84 to E85, and K88 to H89 contribute to the RNA site. H34 functions as the Proton donor in the catalytic mechanism. 3 disulfides stabilise this stretch: C48-C92, C152-C185, and C169-C180. The active site involves E85. Residue H89 is the Proton acceptor of the active site.

This sequence belongs to the RNase T2 family.

The catalysed reaction is a ribonucleotidyl-ribonucleotide-RNA + H2O = a 3'-end 3'-phospho-ribonucleotide-RNA + a 5'-end dephospho-ribonucleoside-RNA + H(+). Functionally, ribonuclease cleaving preferentially the 5'-side of uridine. In Momordica charantia (Bitter gourd), this protein is Ribonuclease MC.